A 332-amino-acid polypeptide reads, in one-letter code: MGFITRFLVFMSLFTSLVSGFALQKLPLIQFDEGYTQLFGDQNLIVHRDGKSVRLTLDERTGSGFVSNDIYLHGFFSSSIKLPADYSAGVVIAFYLSNGDLYEKNHDEIDFEFLGNIRGREWRIQTNIYGNGSTHLGREERYNLWFDPTEDFHQYSILWSLSHIIFYVDNVPIREVKRTASMGGDFPAKPMSLYSTIWDGSKWATDGGKYGVNYKYAPYVSQFTDLILHGCAVDPTEKFPSCKDEAVQNLRLASEITESQRNKMEIFRQKHMTYSYCYDHMRYKVVLSECVVNPAEAKRLRVYDPVTFGGIPHGHRRGKHRSRSRLARTESI.

The signal sequence occupies residues 1 to 22 (MGFITRFLVFMSLFTSLVSGFA). In terms of domain architecture, GH16 spans 23 to 223 (LQKLPLIQFD…YKYAPYVSQF (201 aa)). E108 serves as the catalytic Nucleophile. E112 (proton donor) is an active-site residue. Xyloglucan is bound by residues E112 and 125 to 127 (QTN). N-linked (GlcNAc...) asparagine glycosylation occurs at N131. Xyloglucan is bound by residues 135 to 139 (HLGRE), 202 to 203 (KW), G207, and R282. C277 and C290 form a disulfide bridge. A compositionally biased stretch (basic residues) spans 313-326 (HGHRRGKHRSRSRL). The tract at residues 313-332 (HGHRRGKHRSRSRLARTESI) is disordered.

The protein belongs to the glycosyl hydrolase 16 family. XTH group 3 subfamily. In terms of processing, contains at least one intrachain disulfide bond essential for its enzymatic activity. As to expression, expressed in 7 day old seedlings, roots, rosette leaves, internodes between nodes bearing axillary shoots, nodes bearing flowers, flower buds and siliques.

The protein localises to the secreted. The protein resides in the cell wall. It is found in the extracellular space. It localises to the apoplast. The enzyme catalyses breaks a beta-(1-&gt;4) bond in the backbone of a xyloglucan and transfers the xyloglucanyl segment on to O-4 of the non-reducing terminal glucose residue of an acceptor, which can be a xyloglucan or an oligosaccharide of xyloglucan.. In terms of biological role, catalyzes xyloglucan endohydrolysis (XEH) and/or endotransglycosylation (XET). Cleaves and religates xyloglucan polymers, an essential constituent of the primary cell wall, and thereby participates in cell wall construction of growing tissues. In Arabidopsis thaliana (Mouse-ear cress), this protein is Probable xyloglucan endotransglucosylase/hydrolase protein 28 (XTH28).